The primary structure comprises 335 residues: MVREKVTVSTRTLQWKCVESRTDSKRLYYGRFILSPLTKGQADTIGIAMRRALLAEIEGTRITRVKFANTSHEYSTIAGIQESVHEILMNLKEIVLRSNLYGTCDASISIKGPGYVTAEDIILPPHVEIVDSTQHIAWLTEPINFFIGLKIERNHGYFIKTHANFEDGSYPIDALFMPVRNANHSINSYGNEKQEILFLEIWTNGSLTPKEALHEASRNLIDLFIPFLHMEEENLHLEDADHTIPLSPFTVYDKVAKLRKNKKKLSLESIFIDQLEFPPKIYNCLKKSNIFTLLDLLNNSQEDLIKIEHFHLEDVKQILGILGKHFALDLPKNLN.

The segment at Met1–Glu231 is alpha N-terminal domain (alpha-NTD). The interval Lys262–Asn335 is alpha C-terminal domain (alpha-CTD).

This sequence belongs to the RNA polymerase alpha chain family. In plastids the minimal PEP RNA polymerase catalytic core is composed of four subunits: alpha, beta, beta', and beta''. When a (nuclear-encoded) sigma factor is associated with the core the holoenzyme is formed, which can initiate transcription.

It is found in the plastid. It carries out the reaction RNA(n) + a ribonucleoside 5'-triphosphate = RNA(n+1) + diphosphate. In terms of biological role, DNA-dependent RNA polymerase catalyzes the transcription of DNA into RNA using the four ribonucleoside triphosphates as substrates. In Cuscuta reflexa (Southern Asian dodder), this protein is DNA-directed RNA polymerase subunit alpha.